Consider the following 362-residue polypeptide: Probable dual-specificity RNA methyltransferase RlmN (362 aa).

Catalysis depends on glutamate 105, which acts as the Proton acceptor. The region spanning 111-344 (HEYGNSICVT…VTIRREQGHD (234 aa)) is the Radical SAM core domain. The cysteines at positions 118 and 349 are disulfide-linked. [4Fe-4S] cluster is bound by residues cysteine 125, cysteine 129, and cysteine 132. S-adenosyl-L-methionine is bound by residues 175-176 (GE), serine 207, 230-232 (SLH), and asparagine 306. Cysteine 349 acts as the S-methylcysteine intermediate in catalysis.

It belongs to the radical SAM superfamily. RlmN family. It depends on [4Fe-4S] cluster as a cofactor.

It localises to the cytoplasm. The enzyme catalyses adenosine(2503) in 23S rRNA + 2 reduced [2Fe-2S]-[ferredoxin] + 2 S-adenosyl-L-methionine = 2-methyladenosine(2503) in 23S rRNA + 5'-deoxyadenosine + L-methionine + 2 oxidized [2Fe-2S]-[ferredoxin] + S-adenosyl-L-homocysteine. The catalysed reaction is adenosine(37) in tRNA + 2 reduced [2Fe-2S]-[ferredoxin] + 2 S-adenosyl-L-methionine = 2-methyladenosine(37) in tRNA + 5'-deoxyadenosine + L-methionine + 2 oxidized [2Fe-2S]-[ferredoxin] + S-adenosyl-L-homocysteine. Its function is as follows. Specifically methylates position 2 of adenine 2503 in 23S rRNA and position 2 of adenine 37 in tRNAs. This chain is Probable dual-specificity RNA methyltransferase RlmN, found in Bacillus thuringiensis subsp. konkukian (strain 97-27).